Here is a 508-residue protein sequence, read N- to C-terminus: Cytochrome P450 monooxygenase pkfB (508 aa).

A helical membrane pass occupies residues 9–29 (FSLGLSQILVCLALLYAAIHI). N-linked (GlcNAc...) asparagine glycosylation is found at Asn57 and Asn305. Cys450 contacts heme.

Belongs to the cytochrome P450 family. Requires heme as cofactor.

It localises to the membrane. It participates in secondary metabolite biosynthesis. Its function is as follows. Cytochrome P450 monooxygenase; part of the gene cluster that mediates the biosynthesis of aspernidine A, a prenylated isoindolinone. The starting point of the biosynthesis of aspernidin A is the production of orsellinaldehyde by the non-reducing polyketide synthase pkfA. Hydroxylation, methylation of one of the phenol groups, and prenylation, presumably catalyzed by the prenyltransferase pkfE, would be needed to yield aspernidine D. Subsequently, the cytochrome P450 monooxygenase pkfB is responsible for hydroxylation of aspernidine D to yield aspernidine E. The dehydrogenase pkfF may be responsible for further oxidation of aspernidine E to form a dialdehyde intermediate which is further transformed in a series of steps, some of which are enzyme-mediated, to generate aspernidine A. The possibility that additional enzymes outside of the cluster are involved in aspernidine A biosynthesis cannot be excluded. The protein is Cytochrome P450 monooxygenase pkfB of Emericella nidulans (strain FGSC A4 / ATCC 38163 / CBS 112.46 / NRRL 194 / M139) (Aspergillus nidulans).